We begin with the raw amino-acid sequence, 977 residues long: Zinc finger CCCH domain-containing protein 7B (977 aa).

TPR repeat units lie at residues 1 to 27 (MERQ…KQEE), 36 to 69 (VQNL…ADYA), and 82 to 115 (CKLH…DSES). Phosphoserine is present on serine 217. Residues 248 to 256 (STDSLDDFS) carry the LD motif; interaction with NSP3 motif. Phosphoserine occurs at positions 364 and 367. Residues 365–403 (FGSTRGSLDKPDSFMEETNSQDHRPPSGAQKPAPSPEPC) form a disordered region. 3 C3H1-type zinc fingers span residues 484 to 508 (LCKD…HQEE), 616 to 638 (VCRH…HSFI), and 754 to 782 (PQQY…HSPE). The segment at 842–866 (YHCWLCGKNSNSKKQWQQHIQSEKH) adopts a C2H2-type zinc-finger fold. The C3H1-type 4 zinc finger occupies 886–914 (MGEFRLCDRLQKGKACPDGDKCRCAHGQE).

As to quaternary structure, (Microbial infection) Interacts (via LD motif) with rotavirus A NSP3 (via the coiled-coil region).

The protein localises to the nucleus. In terms of biological role, may be a specific regulator of miRNA biogenesis. Binds to microRNAs MIR7-1, MIR16-2 and MIR29A hairpins recognizing the 'ATA(A/T)' motif in the apical loop. This chain is Zinc finger CCCH domain-containing protein 7B (ZC3H7B), found in Homo sapiens (Human).